A 342-amino-acid chain; its full sequence is Putative glycosyltransferases (342 aa).

Transmembrane regions (helical) follow at residues 227-247 (IFYL…YLII) and 262-282 (VIVS…LVGI).

Belongs to the glycosyltransferase 2 family.

The protein localises to the cell membrane. Functionally, may play only a redundant role in maintaining cell wall viability and bacterial virulence. The protein is Putative glycosyltransferases (pimF) of Mycobacterium tuberculosis (strain CDC 1551 / Oshkosh).